A 532-amino-acid polypeptide reads, in one-letter code: Copalyl diphosphate synthase (532 aa).

The DXDDTA motif signature appears at 313-318 (DTDDTA). Residues 443–449 (QSDDGSW) carry the QXXDGSW motif motif.

The protein belongs to the terpene synthase family. Mg(2+) serves as cofactor.

The enzyme catalyses (2E,6E,10E)-geranylgeranyl diphosphate = (+)-copalyl diphosphate. Its function is as follows. Involved in the biosynthesis of the mercapturic acid derivative diterpene cyslabdan A, a potentiator of the beta-lactam antibiotic imipenem. Catalyzes the conversion of geranylgeranyl diphosphate (GGDP) into (+)-copalyl diphosphate. The sequence is that of Copalyl diphosphate synthase from Streptomyces cyslabdanicus.